The primary structure comprises 330 residues: Ribosomal RNA small subunit methyltransferase C (330 aa).

It belongs to the methyltransferase superfamily. RsmC family. In terms of assembly, monomer.

The protein localises to the cytoplasm. It catalyses the reaction guanosine(1207) in 16S rRNA + S-adenosyl-L-methionine = N(2)-methylguanosine(1207) in 16S rRNA + S-adenosyl-L-homocysteine + H(+). Functionally, specifically methylates the guanine in position 1207 of 16S rRNA in the 30S particle. This chain is Ribosomal RNA small subunit methyltransferase C, found in Haemophilus influenzae (strain 86-028NP).